The sequence spans 348 residues: Nicotinate-nucleotide--dimethylbenzimidazole phosphoribosyltransferase (348 aa).

Glutamate 316 serves as the catalytic Proton acceptor.

The protein belongs to the CobT family.

The enzyme catalyses 5,6-dimethylbenzimidazole + nicotinate beta-D-ribonucleotide = alpha-ribazole 5'-phosphate + nicotinate + H(+). The protein operates within nucleoside biosynthesis; alpha-ribazole biosynthesis; alpha-ribazole from 5,6-dimethylbenzimidazole: step 1/2. Functionally, catalyzes the synthesis of alpha-ribazole-5'-phosphate from nicotinate mononucleotide (NAMN) and 5,6-dimethylbenzimidazole (DMB). This chain is Nicotinate-nucleotide--dimethylbenzimidazole phosphoribosyltransferase, found in Xanthomonas oryzae pv. oryzae (strain PXO99A).